Here is a 383-residue protein sequence, read N- to C-terminus: Galactokinase (383 aa).

34–37 (EHTD) serves as a coordination point for substrate. Position 124–130 (124–130 (GAGLSSS)) interacts with ATP. Mg(2+)-binding residues include S130 and E162. D174 serves as the catalytic Proton acceptor. Residue Y223 coordinates substrate.

The protein belongs to the GHMP kinase family. GalK subfamily.

The protein localises to the cytoplasm. The catalysed reaction is alpha-D-galactose + ATP = alpha-D-galactose 1-phosphate + ADP + H(+). It functions in the pathway carbohydrate metabolism; galactose metabolism. Catalyzes the transfer of the gamma-phosphate of ATP to D-galactose to form alpha-D-galactose-1-phosphate (Gal-1-P). The sequence is that of Galactokinase from Yersinia enterocolitica serotype O:8 / biotype 1B (strain NCTC 13174 / 8081).